A 369-amino-acid polypeptide reads, in one-letter code: Chaperone protein DnaJ (369 aa).

The J domain maps to 7-73 (DYYEILGVPR…QKRAMYDRFG (67 aa)). The segment at 143–225 (GAEIPVEYER…CGGSGRVLRK (83 aa)) adopts a CR-type zinc-finger fold. Positions 156, 159, 173, 176, 199, 202, 213, and 216 each coordinate Zn(2+). 4 CXXCXGXG motif repeats span residues 156-163 (CPRCGGTG), 173-180 (CPSCGGTG), 199-206 (CERCGGTG), and 213-220 (CHECGGSG).

It belongs to the DnaJ family. As to quaternary structure, homodimer. Zn(2+) serves as cofactor.

It is found in the cytoplasm. In terms of biological role, participates actively in the response to hyperosmotic and heat shock by preventing the aggregation of stress-denatured proteins and by disaggregating proteins, also in an autonomous, DnaK-independent fashion. Unfolded proteins bind initially to DnaJ; upon interaction with the DnaJ-bound protein, DnaK hydrolyzes its bound ATP, resulting in the formation of a stable complex. GrpE releases ADP from DnaK; ATP binding to DnaK triggers the release of the substrate protein, thus completing the reaction cycle. Several rounds of ATP-dependent interactions between DnaJ, DnaK and GrpE are required for fully efficient folding. Also involved, together with DnaK and GrpE, in the DNA replication of plasmids through activation of initiation proteins. This is Chaperone protein DnaJ from Thermotoga maritima (strain ATCC 43589 / DSM 3109 / JCM 10099 / NBRC 100826 / MSB8).